A 193-amino-acid polypeptide reads, in one-letter code: Protein PapJ (193 aa).

Residues 1-27 (MVVNKTTAVLYLIALSLSGFIHTFLRA) form the signal peptide.

The protein localises to the periplasm. In terms of biological role, this protein maintains pilus integrity and thus is an important participant in pilus assembly. It may function as molecular chaperone directly or indirectly in the correct assembly of PapA subunits. The sequence is that of Protein PapJ (papJ) from Escherichia coli.